The chain runs to 83 residues: UPF0346 protein M28_Spy0369 (83 aa).

It belongs to the UPF0346 family.

This chain is UPF0346 protein M28_Spy0369, found in Streptococcus pyogenes serotype M28 (strain MGAS6180).